The chain runs to 185 residues: ATP synthase subunit delta, chloroplastic (185 aa).

Belongs to the ATPase delta chain family. In terms of assembly, F-type ATPases have 2 components, F(1) - the catalytic core - and F(0) - the membrane proton channel. F(1) has five subunits: alpha(3), beta(3), gamma(1), delta(1), epsilon(1). CF(0) has four main subunits: a(1), b(1), b'(1) and c(10-14). The alpha and beta chains form an alternating ring which encloses part of the gamma chain. F(1) is attached to F(0) by a central stalk formed by the gamma and epsilon chains, while a peripheral stalk is formed by the delta, b and b' chains.

The protein localises to the plastid. It localises to the chloroplast thylakoid membrane. In terms of biological role, f(1)F(0) ATP synthase produces ATP from ADP in the presence of a proton or sodium gradient. F-type ATPases consist of two structural domains, F(1) containing the extramembraneous catalytic core and F(0) containing the membrane proton channel, linked together by a central stalk and a peripheral stalk. During catalysis, ATP synthesis in the catalytic domain of F(1) is coupled via a rotary mechanism of the central stalk subunits to proton translocation. This protein is part of the stalk that links CF(0) to CF(1). It either transmits conformational changes from CF(0) to CF(1) or is implicated in proton conduction. The protein is ATP synthase subunit delta, chloroplastic of Gracilaria tenuistipitata var. liui (Red alga).